Here is a 105-residue protein sequence, read N- to C-terminus: Thioredoxin (105 aa).

The Thioredoxin domain occupies 1-105 (MANNVTDSSF…SLLDWINKSI (105 aa)). Cysteine 30 and cysteine 33 form a disulfide bridge.

Belongs to the thioredoxin family.

Its function is as follows. Component of the thioredoxin-thioredoxin reductase system. Participates in various redox reactions through the reversible oxidation of its active center dithiol to a disulfide and catalyzes dithiol-disulfide exchange reactions. The protein is Thioredoxin (trxA) of Rickettsia felis (strain ATCC VR-1525 / URRWXCal2) (Rickettsia azadi).